The following is a 347-amino-acid chain: MSWDLSTAKPPVVVDTTLRDGSHAHRHQYTVEEARAIAQALDEAGVYAIEVSHGDGLGGSSLQYGFSRTDEMELIRAVRETVRRAKVAALLLPGIGTRKELKEAVEAGIQMVRIATQCTEADISEQHFGMAKEMGLEAVGFLMMSHMRPPEFLAEQARLMEGYGADVVYIVDSAGAMLPEDAYARVKALKEALSRAKVGFHAHNNLGLAIGNTLAALAAGADWVDATLRGYGAGAGNAPLEVLAAVLDKAGLNPGLDVFKLLDAAEYVMGPILHFQPYPDRDSVAIGYAGVYSTFLLHAKRIGKELGVDPLAILLELGRRQAVAGQEDWILRVALELKEKEAGALAD.

Residues 11-262 form the Pyruvate carboxyltransferase domain; the sequence is PVVVDTTLRD…NPGLDVFKLL (252 aa). Position 19–20 (19–20) interacts with substrate; that stretch reads RD. Aspartate 20 provides a ligand contact to Mn(2+). The active-site Proton acceptor is the histidine 23. Positions 173 and 201 each coordinate substrate. 2 residues coordinate Mn(2+): histidine 201 and histidine 203. Tyrosine 292 lines the substrate pocket.

This sequence belongs to the 4-hydroxy-2-oxovalerate aldolase family. Homodimer. Can also form a heterotetramer composed of two aldolase (TTHB246) and two dehydrogenase (TTHB247) subunits. Upon complex formation, the aldolase shows a 5-fold increase in substrate affinity, while the dehydrogenase shows a 3-fold decrease; the kcat values of each enzyme are reduced by 2-fold when they are in a complex. The cofactor is Co(2+). Ni(2+) serves as cofactor. It depends on Mn(2+) as a cofactor.

It carries out the reaction (S)-4-hydroxy-2-oxopentanoate = acetaldehyde + pyruvate. It catalyses the reaction (S)-4-hydroxy-2-oxohexanoate = propanal + pyruvate. With respect to regulation, appears to be allosterically activated by NADH. Functionally, catalyzes the retro-aldol cleavage of both 4-hydroxy-2-oxopentanoate (HOPA) and 4-hydroxy-2-oxohexanoate (HOHA) to pyruvate and acetaldehyde or propanaldehyde, respectively. The aldehydes produced by this reaction are directly channeled to the dehydrogenase TTHB247, ensuring that these toxic aldehydes are sequestered from cellular components. Is involved in the meta-cleavage pathway for the degradation of aromatic compounds. Appears to be stereospecific since it can cleave (4S)-4-hydroxy-2-oxopentanoate but not the (4R) isomer. Is not able to catalyze the aldol addition of 2-oxobutyrate with acetaldehyde; this indicates that the enzyme is specific for pyruvate as the carbonyl donor. The sequence is that of 4-hydroxy-2-oxovalerate aldolase from Thermus thermophilus (strain ATCC 27634 / DSM 579 / HB8).